Here is a 641-residue protein sequence, read N- to C-terminus: Bilirubin reductase (641 aa).

Residue Gln96 coordinates FMN. Residue Arg167 is the Proton donor of the active site. Residues Lys214, Arg295, and 317 to 318 each bind FMN; that span reads GR. The [4Fe-4S] cluster site is built by Cys341, Cys344, Cys348, and Cys360. Residues Ala391, Glu410, Gln418, Lys428, and Ala455 each contribute to the FAD site.

The protein in the N-terminal section; belongs to the NADH:flavin oxidoreductase/NADH oxidase family. FAD is required as a cofactor. It depends on FMN as a cofactor. Requires [4Fe-4S] cluster as cofactor.

The catalysed reaction is urobilinogen + 4 A = (4Z,15Z)-bilirubin IXalpha + 4 AH2. The enzyme catalyses urobilinogen + 2 A = (4Z,15Z)-mesobilirubin IXalpha + 2 AH2. It functions in the pathway porphyrin-containing compound metabolism; protoheme degradation. Functionally, bilirubin reductase that catalyzes reduction of mesobilirubin and/or bilirubin to urobilinogen, a key step during heme degradation. Urobilinogen then spontaneously degrades into urobilin, which gives urine its distinctive yellow color. This Mediterraneibacter gnavus (strain CC55_001C) protein is Bilirubin reductase.